The chain runs to 556 residues: ATP synthase subunit alpha 2 (556 aa).

177–184 (GDRATGKT) contacts ATP. Residues 514–556 (GGHAEDAADDMGGALDGEHASGDATSIAPTPPGGAEAGAPRKR) are disordered. Residues 546–556 (GGAEAGAPRKR) are compositionally biased toward low complexity.

It belongs to the ATPase alpha/beta chains family. F-type ATPases have 2 components, CF(1) - the catalytic core - and CF(0) - the membrane proton channel. CF(1) has five subunits: alpha(3), beta(3), gamma(1), delta(1), epsilon(1). CF(0) has three main subunits: a(1), b(2) and c(9-12). The alpha and beta chains form an alternating ring which encloses part of the gamma chain. CF(1) is attached to CF(0) by a central stalk formed by the gamma and epsilon chains, while a peripheral stalk is formed by the delta and b chains.

Its subcellular location is the cell inner membrane. It catalyses the reaction ATP + H2O + 4 H(+)(in) = ADP + phosphate + 5 H(+)(out). Its function is as follows. Produces ATP from ADP in the presence of a proton gradient across the membrane. The alpha chain is a regulatory subunit. This Burkholderia thailandensis (strain ATCC 700388 / DSM 13276 / CCUG 48851 / CIP 106301 / E264) protein is ATP synthase subunit alpha 2.